We begin with the raw amino-acid sequence, 134 residues long: Large ribosomal subunit protein uL16c (134 aa).

It belongs to the universal ribosomal protein uL16 family. Part of the 50S ribosomal subunit.

Its subcellular location is the plastid. It localises to the chloroplast. In Atropa belladonna (Belladonna), this protein is Large ribosomal subunit protein uL16c.